We begin with the raw amino-acid sequence, 342 residues long: Nucleoid-associated protein Sputcn32_2288 (342 aa).

Belongs to the YejK family.

It is found in the cytoplasm. It localises to the nucleoid. In Shewanella putrefaciens (strain CN-32 / ATCC BAA-453), this protein is Nucleoid-associated protein Sputcn32_2288.